The primary structure comprises 535 residues: T-complex protein 1 subunit beta (535 aa).

Ala-2 carries the N-acetylalanine modification. Phosphoserine is present on Ser-3. Position 13 is an N6-acetyllysine (Lys-13). Gly-44 contributes to the ADP binding site. Gly-44 contributes to the ATP binding site. A Phosphoserine modification is found at Ser-60. Asp-97 lines the Mg(2+) pocket. ADP is bound by residues Gly-98, Thr-99, Thr-100, and Ser-101. Positions 98, 99, and 100 each coordinate ATP. Lys-154 bears the N6-acetyllysine mark. Ser-168 and Ser-169 together coordinate ADP. Lys-181 carries the N6-acetyllysine modification. Lys-248 is covalently cross-linked (Glycyl lysine isopeptide (Lys-Gly) (interchain with G-Cter in SUMO2)). Ser-260 carries the phosphoserine modification. Thr-261 carries the phosphothreonine modification. ADP is bound by residues Gly-410, Glu-495, and Lys-500. Glu-495 and Lys-500 together coordinate ATP.

It belongs to the TCP-1 chaperonin family. In terms of assembly, component of the chaperonin-containing T-complex (TRiC), a hexadecamer composed of two identical back-to-back stacked rings enclosing a protein folding chamber. Each ring is made up of eight different subunits: TCP1/CCT1, CCT2, CCT3, CCT4, CCT5, CCT6A/CCT6, CCT7, CCT8. Interacts with PACRG. Interacts with FLCN. Interacts with DLEC1. Interacts with SVEP1.

The protein localises to the cytoplasm. The catalysed reaction is ATP + H2O = ADP + phosphate + H(+). Its function is as follows. Component of the chaperonin-containing T-complex (TRiC), a molecular chaperone complex that assists the folding of actin, tubulin and other proteins upon ATP hydrolysis. The TRiC complex mediates the folding of WRAP53/TCAB1, thereby regulating telomere maintenance. As part of the TRiC complex may play a role in the assembly of BBSome, a complex involved in ciliogenesis regulating transports vesicles to the cilia. This chain is T-complex protein 1 subunit beta (Cct2), found in Rattus norvegicus (Rat).